The primary structure comprises 254 residues: PF03932 family protein CutC (254 aa).

The protein belongs to the CutC family.

The protein resides in the cytoplasm. This Yersinia enterocolitica serotype O:8 / biotype 1B (strain NCTC 13174 / 8081) protein is PF03932 family protein CutC.